A 101-amino-acid polypeptide reads, in one-letter code: MILEHVLVLSAYLFLIGLYGLITSRNMVRALMCLELILNAVNMNFVTFSDFFDNSQLKGDIFCIFVIAIAAAEAAIGLAIVSSIYRNRKSTRINQSTLLNK.

The next 3 helical transmembrane spans lie at 2-22 (ILEHVLVLSAYLFLIGLYGLI), 32-52 (MCLELILNAVNMNFVTFSDFF), and 61-81 (IFCIFVIAIAAAEAAIGLAIV).

It belongs to the complex I subunit 4L family. NDH is composed of at least 16 different subunits, 5 of which are encoded in the nucleus.

It localises to the plastid. It is found in the chloroplast thylakoid membrane. The catalysed reaction is a plastoquinone + NADH + (n+1) H(+)(in) = a plastoquinol + NAD(+) + n H(+)(out). The enzyme catalyses a plastoquinone + NADPH + (n+1) H(+)(in) = a plastoquinol + NADP(+) + n H(+)(out). In terms of biological role, NDH shuttles electrons from NAD(P)H:plastoquinone, via FMN and iron-sulfur (Fe-S) centers, to quinones in the photosynthetic chain and possibly in a chloroplast respiratory chain. The immediate electron acceptor for the enzyme in this species is believed to be plastoquinone. Couples the redox reaction to proton translocation, and thus conserves the redox energy in a proton gradient. The chain is NAD(P)H-quinone oxidoreductase subunit 4L, chloroplastic from Lepidium virginicum (Virginia pepperweed).